We begin with the raw amino-acid sequence, 472 residues long: Trigger factor (472 aa).

Residues 174–261 form the PPIase FKBP-type domain; it reads GDIAVLGFKG…LKDLKTRELP (88 aa). A disordered region spans residues 430 to 472; it reads ENSTLTEQAPAADDADDAEKPAAKKKPAAKKKTPAKSKTDAEA. Basic residues predominate over residues 452-464; it reads AKKKPAAKKKTPA.

Belongs to the FKBP-type PPIase family. Tig subfamily.

It localises to the cytoplasm. It catalyses the reaction [protein]-peptidylproline (omega=180) = [protein]-peptidylproline (omega=0). Its function is as follows. Involved in protein export. Acts as a chaperone by maintaining the newly synthesized protein in an open conformation. Functions as a peptidyl-prolyl cis-trans isomerase. In Parasynechococcus marenigrum (strain WH8102), this protein is Trigger factor.